Reading from the N-terminus, the 888-residue chain is Molybdenum cofactor sulfurase (888 aa).

The residue at position 34 (Ser-34) is a Phosphoserine. Lys-264 is subject to N6-(pyridoxal phosphate)lysine. Cys-424 is an active-site residue. A phosphoserine mark is found at Ser-528 and Ser-530. One can recognise an MOSC domain in the interval 706 to 867 (KQSSNSQRNA…LSVGSQVLPV (162 aa)).

Belongs to the class-V pyridoxal-phosphate-dependent aminotransferase family. MOCOS subfamily. Pyridoxal 5'-phosphate serves as cofactor.

It catalyses the reaction Mo-molybdopterin + L-cysteine + AH2 = thio-Mo-molybdopterin + L-alanine + A + H2O. Its pathway is cofactor biosynthesis; molybdopterin biosynthesis. Sulfurates the molybdenum cofactor. Sulfation of molybdenum is essential for xanthine dehydrogenase (XDH) and aldehyde oxidase (ADO) enzymes in which molybdenum cofactor is liganded by 1 oxygen and 1 sulfur atom in active form. In vitro, the C-terminal domain is able to reduce N-hydroxylated prodrugs, such as benzamidoxime. This chain is Molybdenum cofactor sulfurase, found in Homo sapiens (Human).